Reading from the N-terminus, the 236-residue chain is Thiamine-phosphate synthase (236 aa).

4-amino-2-methyl-5-(diphosphooxymethyl)pyrimidine-binding positions include 57–61 (QLRDK) and Asn89. Mg(2+)-binding residues include Asp90 and Asp109. Ser128 is a binding site for 4-amino-2-methyl-5-(diphosphooxymethyl)pyrimidine. Residue 154–156 (TPS) participates in 2-[(2R,5Z)-2-carboxy-4-methylthiazol-5(2H)-ylidene]ethyl phosphate binding. Lys157 is a binding site for 4-amino-2-methyl-5-(diphosphooxymethyl)pyrimidine. 2-[(2R,5Z)-2-carboxy-4-methylthiazol-5(2H)-ylidene]ethyl phosphate-binding positions include Gly185 and 205-206 (IS).

The protein belongs to the thiamine-phosphate synthase family. The cofactor is Mg(2+).

The enzyme catalyses 2-[(2R,5Z)-2-carboxy-4-methylthiazol-5(2H)-ylidene]ethyl phosphate + 4-amino-2-methyl-5-(diphosphooxymethyl)pyrimidine + 2 H(+) = thiamine phosphate + CO2 + diphosphate. The catalysed reaction is 2-(2-carboxy-4-methylthiazol-5-yl)ethyl phosphate + 4-amino-2-methyl-5-(diphosphooxymethyl)pyrimidine + 2 H(+) = thiamine phosphate + CO2 + diphosphate. It catalyses the reaction 4-methyl-5-(2-phosphooxyethyl)-thiazole + 4-amino-2-methyl-5-(diphosphooxymethyl)pyrimidine + H(+) = thiamine phosphate + diphosphate. Its pathway is cofactor biosynthesis; thiamine diphosphate biosynthesis; thiamine phosphate from 4-amino-2-methyl-5-diphosphomethylpyrimidine and 4-methyl-5-(2-phosphoethyl)-thiazole: step 1/1. Functionally, condenses 4-methyl-5-(beta-hydroxyethyl)thiazole monophosphate (THZ-P) and 2-methyl-4-amino-5-hydroxymethyl pyrimidine pyrophosphate (HMP-PP) to form thiamine monophosphate (TMP). The protein is Thiamine-phosphate synthase of Roseiflexus sp. (strain RS-1).